The sequence spans 410 residues: Na(+)-translocating NADH-quinone reductase subunit B (410 aa).

3 helical membrane passes run 56–76 (MMIL…YNVG), 119–139 (LFGA…GGFW), and 159–179 (SILF…ALGI). Residue T232 is modified to FMN phosphoryl threonine. 5 helical membrane passes run 266-286 (GSIG…IVFA), 293-313 (IIAG…FIGS), 318-338 (MFAM…GMLF), 347-367 (SFTN…CVLI), and 377-397 (GMML…YFVA).

The protein belongs to the NqrB/RnfD family. Composed of six subunits; NqrA, NqrB, NqrC, NqrD, NqrE and NqrF. The cofactor is FMN.

It localises to the cell inner membrane. The enzyme catalyses a ubiquinone + n Na(+)(in) + NADH + H(+) = a ubiquinol + n Na(+)(out) + NAD(+). NQR complex catalyzes the reduction of ubiquinone-1 to ubiquinol by two successive reactions, coupled with the transport of Na(+) ions from the cytoplasm to the periplasm. NqrA to NqrE are probably involved in the second step, the conversion of ubisemiquinone to ubiquinol. The sequence is that of Na(+)-translocating NADH-quinone reductase subunit B from Neisseria meningitidis serogroup A / serotype 4A (strain DSM 15465 / Z2491).